The chain runs to 428 residues: Magnesium transporter MRS2-C (428 aa).

The next 2 membrane-spanning stretches (helical) occupy residues 364-384 (LLLT…GVFG) and 400-420 (WTLV…IWYF). The short motif at 384 to 386 (GMN) is the Required for magnesium transport activity element.

This sequence belongs to the CorA metal ion transporter (MIT) (TC 1.A.35.5) family.

It localises to the membrane. Magnesium transporter that may mediate the influx of magnesium. This is Magnesium transporter MRS2-C from Oryza sativa subsp. indica (Rice).